We begin with the raw amino-acid sequence, 235 residues long: MEKKELLYEGKAKKVYKTDKEDYYIIEYKDDATAFNGLKKGVIEEKGVVNNKVSSILFEFLEKRGIPTHYVKMLKDREMLVKKVTIFPLEVIIRNYAAGSICKRLGLQEGIKFKEPVLEFCYKNDELGDPMINEYHIRALELATRDEIDLIKERAFKVNEILSEYFLSKDIILVDFKLEFGKNQEGILLADEISPDTCRFWDKNTMEKLDKDRFRKDLGQVEEAYLEILRRVQQV.

This sequence belongs to the SAICAR synthetase family.

The catalysed reaction is 5-amino-1-(5-phospho-D-ribosyl)imidazole-4-carboxylate + L-aspartate + ATP = (2S)-2-[5-amino-1-(5-phospho-beta-D-ribosyl)imidazole-4-carboxamido]succinate + ADP + phosphate + 2 H(+). It participates in purine metabolism; IMP biosynthesis via de novo pathway; 5-amino-1-(5-phospho-D-ribosyl)imidazole-4-carboxamide from 5-amino-1-(5-phospho-D-ribosyl)imidazole-4-carboxylate: step 1/2. This is Phosphoribosylaminoimidazole-succinocarboxamide synthase from Caldanaerobacter subterraneus subsp. tengcongensis (strain DSM 15242 / JCM 11007 / NBRC 100824 / MB4) (Thermoanaerobacter tengcongensis).